The primary structure comprises 223 residues: MSASYGRIIKDGLWENNGVLCMLLGMCPTMAMTGTATNGLGMGLATAAVMAASNLMVAMFRNYVTHEVRIPVYILIVAANVTFVDLGMNAWMHELYKVLGLFIPLIVSNCLPLARLEAFAAKEPVLPSFLDGLFMGLGFTLALTAIGAVREMIGQGTLFADAALLLGPWAKLLELRVMPADWGILVLILPPGGFLIAGLMVVAKRLVDLAGGKEIKMAGAHSV.

6 consecutive transmembrane segments (helical) span residues 17 to 37 (NGVL…GTAT), 40 to 60 (LGMG…VAMF), 70 to 90 (IPVY…GMNA), 94 to 114 (ELYK…LPLA), 129 to 149 (FLDG…IGAV), and 182 to 202 (WGIL…LMVV).

Belongs to the NqrDE/RnfAE family. The complex is composed of six subunits: RnfA, RnfB, RnfC, RnfD, RnfE and RnfG.

The protein resides in the cell inner membrane. Its function is as follows. Part of a membrane-bound complex that couples electron transfer with translocation of ions across the membrane. This is Ion-translocating oxidoreductase complex subunit E from Paramagnetospirillum magneticum (strain ATCC 700264 / AMB-1) (Magnetospirillum magneticum).